Reading from the N-terminus, the 1205-residue chain is Chromosome partition protein Smc (1205 aa).

Residue proline 32 to asparagine 39 participates in ATP binding. 2 coiled-coil regions span residues lysine 169–histidine 288 and glutamate 330–arginine 499. The SMC hinge domain occupies glycine 514–leucine 628. 3 coiled-coil regions span residues leucine 661–threonine 771, alanine 802–glutamine 836, and aspartate 979–leucine 1033.

The protein belongs to the SMC family. As to quaternary structure, homodimer.

The protein resides in the cytoplasm. In terms of biological role, required for chromosome condensation and partitioning. This is Chromosome partition protein Smc from Mycobacterium tuberculosis (strain ATCC 25618 / H37Rv).